We begin with the raw amino-acid sequence, 547 residues long: Chaperonin GroEL 1 (547 aa).

ATP contacts are provided by residues Thr-30–Pro-33, Lys-51, Asp-87–Thr-91, Gly-415, and Asp-496.

It belongs to the chaperonin (HSP60) family. Forms a cylinder of 14 subunits composed of two heptameric rings stacked back-to-back. Interacts with the co-chaperonin GroES.

It localises to the cytoplasm. It carries out the reaction ATP + H2O + a folded polypeptide = ADP + phosphate + an unfolded polypeptide.. Functionally, together with its co-chaperonin GroES, plays an essential role in assisting protein folding. The GroEL-GroES system forms a nano-cage that allows encapsulation of the non-native substrate proteins and provides a physical environment optimized to promote and accelerate protein folding. The sequence is that of Chaperonin GroEL 1 from Rhodopseudomonas palustris (strain BisA53).